A 379-amino-acid chain; its full sequence is Homoserine O-succinyltransferase (379 aa).

The AB hydrolase-1 domain maps to 51–360; sequence NAVLICHALS…DAPQGHDAFL (310 aa). S157 functions as the Nucleophile in the catalytic mechanism. Position 227 (R227) interacts with substrate. Catalysis depends on residues D323 and H356. D357 contacts substrate.

This sequence belongs to the AB hydrolase superfamily. MetX family. As to quaternary structure, homodimer.

The protein resides in the cytoplasm. The enzyme catalyses L-homoserine + succinyl-CoA = O-succinyl-L-homoserine + CoA. It participates in amino-acid biosynthesis; L-methionine biosynthesis via de novo pathway; O-succinyl-L-homoserine from L-homoserine: step 1/1. Requires MetW for activity. In terms of biological role, transfers a succinyl group from succinyl-CoA to L-homoserine, forming succinyl-L-homoserine. This Pseudomonas syringae pv. syringae (strain B728a) protein is Homoserine O-succinyltransferase.